The chain runs to 304 residues: Aspartate carbamoyltransferase catalytic subunit (304 aa).

2 residues coordinate carbamoyl phosphate: Arg-53 and Thr-54. An L-aspartate-binding site is contributed by Lys-82. Residues Arg-103, His-131, and Gln-134 each coordinate carbamoyl phosphate. L-aspartate contacts are provided by Arg-163 and Arg-224. Carbamoyl phosphate-binding residues include Leu-263 and Pro-264.

This sequence belongs to the aspartate/ornithine carbamoyltransferase superfamily. ATCase family. Heterooligomer of catalytic and regulatory chains.

It carries out the reaction carbamoyl phosphate + L-aspartate = N-carbamoyl-L-aspartate + phosphate + H(+). The protein operates within pyrimidine metabolism; UMP biosynthesis via de novo pathway; (S)-dihydroorotate from bicarbonate: step 2/3. In terms of biological role, catalyzes the condensation of carbamoyl phosphate and aspartate to form carbamoyl aspartate and inorganic phosphate, the committed step in the de novo pyrimidine nucleotide biosynthesis pathway. The sequence is that of Aspartate carbamoyltransferase catalytic subunit from Haloquadratum walsbyi (strain DSM 16790 / HBSQ001).